The following is a 373-amino-acid chain: Aromatic amino acid aminotransferase (373 aa).

The residue at position 212 (Lys-212) is an N6-(pyridoxal phosphate)lysine.

The protein belongs to the class-II pyridoxal-phosphate-dependent aminotransferase family. In terms of assembly, homodimer. The cofactor is pyridoxal 5'-phosphate.

It carries out the reaction an aromatic L-alpha-amino acid + 2-oxoglutarate = an aromatic oxo-acid + L-glutamate. In terms of biological role, aminotransferase that catalyzes the conversion of aromatic amino acids and 2-oxoglutarate into corresponding aromatic oxo acids and L-glutamate. This is Aromatic amino acid aminotransferase from Corynebacterium jeikeium (strain K411).